The sequence spans 679 residues: Methionine--tRNA ligase (679 aa).

Positions 14 to 24 match the 'HIGH' region motif; that stretch reads PYANGSIHLGH. Positions 145, 148, 158, and 161 each coordinate Zn(2+). The 'KMSKS' region signature appears at 331–335; sequence KMSKS. Lys-334 serves as a coordination point for ATP. Residues 577 to 679 form the tRNA-binding domain; it reads AFAAVDLRIA…SGAKPGQRVK (103 aa).

It belongs to the class-I aminoacyl-tRNA synthetase family. MetG type 1 subfamily. In terms of assembly, homodimer. Zn(2+) is required as a cofactor.

The protein resides in the cytoplasm. It catalyses the reaction tRNA(Met) + L-methionine + ATP = L-methionyl-tRNA(Met) + AMP + diphosphate. Is required not only for elongation of protein synthesis but also for the initiation of all mRNA translation through initiator tRNA(fMet) aminoacylation. The sequence is that of Methionine--tRNA ligase from Pseudomonas paraeruginosa (strain DSM 24068 / PA7) (Pseudomonas aeruginosa (strain PA7)).